The following is a 749-amino-acid chain: Photosystem I P700 chlorophyll a apoprotein A1 (749 aa).

The next 8 helical transmembrane spans lie at 70–93, 156–179, 195–219, 291–309, 346–369, 385–411, 433–455, and 531–549; these read VFSA…FHGA, LYAT…FHYH, LNHH…HVSL, TAHH…GHMY, WHAQ…HHMY, LSLF…IFLV, AIIS…LYIH, and FLVH…LILL. Residues Cys573 and Cys582 each coordinate [4Fe-4S] cluster. Transmembrane regions (helical) follow at residues 589–610 and 663–685; these read HVFL…HFSW and LSAY…MFLF. His674 is a chlorophyll a' binding site. 2 residues coordinate chlorophyll a: Met682 and Tyr690. Position 691 (Trp691) interacts with phylloquinone. A helical membrane pass occupies residues 723–743; that stretch reads AVGVAHYLLGGIATTWAFFLA.

This sequence belongs to the PsaA/PsaB family. In terms of assembly, the PsaA/B heterodimer binds the P700 chlorophyll special pair and subsequent electron acceptors. PSI consists of a core antenna complex that captures photons, and an electron transfer chain that converts photonic excitation into a charge separation. The eukaryotic PSI reaction center is composed of at least 11 subunits. Requires P700 is a chlorophyll a/chlorophyll a' dimer, A0 is one or more chlorophyll a, A1 is one or both phylloquinones and FX is a shared 4Fe-4S iron-sulfur center. as cofactor.

Its subcellular location is the plastid. It localises to the chloroplast thylakoid membrane. It catalyses the reaction reduced [plastocyanin] + hnu + oxidized [2Fe-2S]-[ferredoxin] = oxidized [plastocyanin] + reduced [2Fe-2S]-[ferredoxin]. Its function is as follows. PsaA and PsaB bind P700, the primary electron donor of photosystem I (PSI), as well as the electron acceptors A0, A1 and FX. PSI is a plastocyanin-ferredoxin oxidoreductase, converting photonic excitation into a charge separation, which transfers an electron from the donor P700 chlorophyll pair to the spectroscopically characterized acceptors A0, A1, FX, FA and FB in turn. Oxidized P700 is reduced on the lumenal side of the thylakoid membrane by plastocyanin. This Zygnema circumcarinatum (Green alga) protein is Photosystem I P700 chlorophyll a apoprotein A1.